A 297-amino-acid polypeptide reads, in one-letter code: MRPTLDSYTHLAGGKVRDLYTIDDEHLLLVASDRISAYDHVLSTPIPDKGRVLTAMSVFFFNVLGGTNHLAGEPDDDRIPEEVLGRALVVRSLDMVPVECVVRGFLTGSGLVDYNNTGAVCGVALPEGLVEASRLPDPIFTPASKAALGDHDENISFDQVVEKVGQKLAVQLREDTLDVYARASNFAADRGIILADTKLEFGLDSGGNLVLADEVLTPDSSRYWPLEGYEAGKVQPSFDKQFVRDWLTSPESGWDRSSDTTPPPLPQEIVDATRARYIEAYERISGLSFDDWVGPSA.

Belongs to the SAICAR synthetase family.

It carries out the reaction 5-amino-1-(5-phospho-D-ribosyl)imidazole-4-carboxylate + L-aspartate + ATP = (2S)-2-[5-amino-1-(5-phospho-beta-D-ribosyl)imidazole-4-carboxamido]succinate + ADP + phosphate + 2 H(+). The protein operates within purine metabolism; IMP biosynthesis via de novo pathway; 5-amino-1-(5-phospho-D-ribosyl)imidazole-4-carboxamide from 5-amino-1-(5-phospho-D-ribosyl)imidazole-4-carboxylate: step 1/2. The protein is Phosphoribosylaminoimidazole-succinocarboxamide synthase of Rhodococcus erythropolis (strain PR4 / NBRC 100887).